A 282-amino-acid polypeptide reads, in one-letter code: Acetyl-coenzyme A carboxylase carboxyl transferase subunit beta 1 (282 aa).

A CoA carboxyltransferase N-terminal domain is found at 23–282 (LMTKCPECRH…MHTKGGVQHV (260 aa)). Zn(2+) contacts are provided by C27, C30, C46, and C49. The C4-type zinc finger occupies 27 to 49 (CPECRHILLTKELEKNHKVCTKC).

Belongs to the AccD/PCCB family. As to quaternary structure, acetyl-CoA carboxylase is a heterohexamer composed of biotin carboxyl carrier protein (AccB), biotin carboxylase (AccC) and two subunits each of ACCase subunit alpha (AccA) and ACCase subunit beta (AccD). It depends on Zn(2+) as a cofactor.

It is found in the cytoplasm. It catalyses the reaction N(6)-carboxybiotinyl-L-lysyl-[protein] + acetyl-CoA = N(6)-biotinyl-L-lysyl-[protein] + malonyl-CoA. The protein operates within lipid metabolism; malonyl-CoA biosynthesis; malonyl-CoA from acetyl-CoA: step 1/1. In terms of biological role, component of the acetyl coenzyme A carboxylase (ACC) complex. Biotin carboxylase (BC) catalyzes the carboxylation of biotin on its carrier protein (BCCP) and then the CO(2) group is transferred by the transcarboxylase to acetyl-CoA to form malonyl-CoA. This chain is Acetyl-coenzyme A carboxylase carboxyl transferase subunit beta 1, found in Lysinibacillus sphaericus (strain C3-41).